The primary structure comprises 80 residues: Exodeoxyribonuclease 7 small subunit (80 aa).

It belongs to the XseB family. Heterooligomer composed of large and small subunits.

The protein resides in the cytoplasm. It carries out the reaction Exonucleolytic cleavage in either 5'- to 3'- or 3'- to 5'-direction to yield nucleoside 5'-phosphates.. In terms of biological role, bidirectionally degrades single-stranded DNA into large acid-insoluble oligonucleotides, which are then degraded further into small acid-soluble oligonucleotides. The sequence is that of Exodeoxyribonuclease 7 small subunit from Shigella sonnei (strain Ss046).